The sequence spans 473 residues: Photosystem II CP43 reaction center protein (473 aa).

Residues 1-14 constitute a propeptide that is removed on maturation; the sequence is MKILYSQRRFYHVE. 5 helical membrane-spanning segments follow: residues 69–93, 134–155, 178–200, 255–275, and 291–312; these read LFEV…PHLA, LIGP…RDKN, KAMF…RYIN, KPFG…LSYS, and WYNN…ASQA. Glu367 is a [CaMn4O5] cluster binding site. A helical membrane pass occupies residues 447–471; sequence RARAAAAGFEKGINRENEPVLSMKL.

The protein belongs to the PsbB/PsbC family. PsbC subfamily. PSII is composed of 1 copy each of membrane proteins PsbA, PsbB, PsbC, PsbD, PsbE, PsbF, PsbH, PsbI, PsbJ, PsbK, PsbL, PsbM, PsbT, PsbY, PsbZ, Psb30/Ycf12, at least 3 peripheral proteins of the oxygen-evolving complex and a large number of cofactors. It forms dimeric complexes. Binds multiple chlorophylls and provides some of the ligands for the Ca-4Mn-5O cluster of the oxygen-evolving complex. It may also provide a ligand for a Cl- that is required for oxygen evolution. PSII binds additional chlorophylls, carotenoids and specific lipids. is required as a cofactor.

The protein resides in the plastid. It localises to the chloroplast thylakoid membrane. In terms of biological role, one of the components of the core complex of photosystem II (PSII). It binds chlorophyll and helps catalyze the primary light-induced photochemical processes of PSII. PSII is a light-driven water:plastoquinone oxidoreductase, using light energy to abstract electrons from H(2)O, generating O(2) and a proton gradient subsequently used for ATP formation. This is Photosystem II CP43 reaction center protein from Galdieria sulphuraria (Red alga).